Here is a 530-residue protein sequence, read N- to C-terminus: UDP-glucuronosyltransferase 1A10 (530 aa).

Residues 1–25 (MARAGWTSPVPLCVCLLLTCGFAEA) form the signal peptide. Residues N71, N292, and N344 are each glycosylated (N-linked (GlcNAc...) asparagine). The helical transmembrane segment at 488–504 (VIGFLLAVVLTVAFITF) threads the bilayer.

The protein belongs to the UDP-glycosyltransferase family. Homodimer. Homooligomer. Interacts with UGT1A1, UGT1A3, UGT1A4, UGT1A6, UGT1A7, UGT1A8 and UGT1A9 to form heterodimers. Isoform 1 interacts with isoform 2/i2 suggesting that oligomerization is involved in negative regulation of transferase activity by isoform 2. Isoform 1 also interacts with respective i2 isoforms of UGT1A1, UGT1A3, UGT1A4, UGT1A6, UGT1A7, UGT1A8 and UGT1A9. As to expression, liver and colon. Isoform 1 and isoform 2 are expressed in colon, esophagus and small intestine; isoform 2 but not isoform 1 is expressed in liver or kidney.

Its subcellular location is the endoplasmic reticulum membrane. It catalyses the reaction glucuronate acceptor + UDP-alpha-D-glucuronate = acceptor beta-D-glucuronoside + UDP + H(+). It carries out the reaction 17beta-estradiol + UDP-alpha-D-glucuronate = 17beta-estradiol 3-O-(beta-D-glucuronate) + UDP + H(+). The catalysed reaction is 17beta-estradiol + UDP-alpha-D-glucuronate = 17beta-estradiol 17-O-(beta-D-glucuronate) + UDP + H(+). The enzyme catalyses 17alpha-estradiol + UDP-alpha-D-glucuronate = 17alpha-estradiol 3-O-(beta-D-glucuronate) + UDP + H(+). It catalyses the reaction 16alpha,17beta-estriol + UDP-alpha-D-glucuronate = 16alpha,17beta-estriol 3-O-(beta-D-glucuronate) + UDP + H(+). It carries out the reaction 16beta,17beta-estriol + UDP-alpha-D-glucuronate = 16beta,17beta-estriol 3-O-(beta-D-glucuronate) + UDP + H(+). The catalysed reaction is 16alpha,17alpha-estriol + UDP-alpha-D-glucuronate = 16alpha,17alpha-estriol 3-O-(beta-D-glucuronate) + UDP + H(+). The enzyme catalyses 16alpha-hydroxyestrone + UDP-alpha-D-glucuronate = 16alpha-hydroxyestrone 3-O-(beta-D-glucuronate) + UDP + H(+). It catalyses the reaction estrone + UDP-alpha-D-glucuronate = estrone 3-O-(beta-D-glucuronate) + UDP + H(+). It carries out the reaction prunetin + UDP-alpha-D-glucuronate = prunetin-4'-O-beta-D-glucuronide + UDP. The catalysed reaction is (5Z,8Z,11Z,14Z)-eicosatetraenoate + UDP-alpha-D-glucuronate = O-[(5Z),(8Z),(11Z),(14Z)-eicosatetraenoyl]-beta-D-glucuronate + UDP. The enzyme catalyses 15-hydroxy-(5Z,8Z,11Z,13E)-eicosatetraenoate + UDP-alpha-D-glucuronate = 15-O-(beta-D-glucuronosyl)-(5Z,8Z,11Z,14Z)-eicosatetraenoate + UDP + H(+). It catalyses the reaction prostaglandin B1 + UDP-alpha-D-glucuronate = 15-O-(beta-D-glucuronosyl)-prostaglandin B1 + UDP + H(+). It carries out the reaction (E)-ferulate + UDP-alpha-D-glucuronate = (E)-4-O-(beta-D-glucuronosyl)-ferulate + UDP + H(+). The catalysed reaction is (E)-ferulate + UDP-alpha-D-glucuronate = (E)-ferulic acid beta-D-glucuronate ester + UDP. The enzyme catalyses losartan + UDP-alpha-D-glucuronate = losartan-2-N-beta-D-glucuronide + UDP. It catalyses the reaction candesartan + UDP-alpha-D-glucuronate = candesartan O-beta-D-glucuronoside + UDP. It carries out the reaction candesartan + UDP-alpha-D-glucuronate = candesartan-2-N-beta-D-glucuronide + UDP. The catalysed reaction is zolasartan + UDP-alpha-D-glucuronate = zolarsartan-1-N-beta-D-glucuronide + UDP. Functionally, UDP-glucuronosyltransferase (UGT) that catalyzes phase II biotransformation reactions in which lipophilic substrates are conjugated with glucuronic acid to increase the metabolite's water solubility, thereby facilitating excretion into either the urine or bile. Essential for the elimination and detoxification of drugs, xenobiotics and endogenous compounds. Catalyzes the glucuronidation of endogenous estrogen hormones such as estradiol, estrone and estriol. Involved in the glucuronidation of arachidonic acid (AA) and AA-derived eicosanoids including 15-HETE and PGB1. Involved in the glucuronidation of the phytochemical ferulic acid at the phenolic or the carboxylic acid group. Also catalyzes the glucuronidation of the isoflavones genistein, daidzein, glycitein, formononetin, biochanin A and prunetin, which are phytoestrogens with anticancer and cardiovascular properties. Involved in the glucuronidation of the AGTR1 angiotensin receptor antagonist losartan, caderastan and zolarsatan, drugs which can inhibit the effect of angiotensin II. Lacks UGT glucuronidation activity but acts as a negative regulator of isoform 1. The sequence is that of UDP-glucuronosyltransferase 1A10 from Homo sapiens (Human).